Consider the following 391-residue polypeptide: Protein-glutamate methylesterase/protein-glutamine glutaminase (391 aa).

A Response regulatory domain is found at 4–121 (KVLVVDDSSF…ARNNEDAIKL (118 aa)). The residue at position 55 (aspartate 55) is a 4-aspartylphosphate. The 195-residue stretch at 197 to 391 (SGKHYQLVAI…IRLKTEVGCG (195 aa)) folds into the CheB-type methylesterase domain. Catalysis depends on residues serine 209, histidine 236, and aspartate 333.

It belongs to the CheB family. Phosphorylated by CheA. Phosphorylation of the N-terminal regulatory domain activates the methylesterase activity.

Its subcellular location is the cytoplasm. The catalysed reaction is [protein]-L-glutamate 5-O-methyl ester + H2O = L-glutamyl-[protein] + methanol + H(+). It catalyses the reaction L-glutaminyl-[protein] + H2O = L-glutamyl-[protein] + NH4(+). In terms of biological role, involved in chemotaxis. Part of a chemotaxis signal transduction system that modulates chemotaxis in response to various stimuli. Catalyzes the demethylation of specific methylglutamate residues introduced into the chemoreceptors (methyl-accepting chemotaxis proteins or MCP) by CheR. Also mediates the irreversible deamidation of specific glutamine residues to glutamic acid. The polypeptide is Protein-glutamate methylesterase/protein-glutamine glutaminase (Pseudoalteromonas translucida (strain TAC 125)).